The primary structure comprises 240 residues: Tumor protein p53-inducible nuclear protein 1 (240 aa).

An LIR motif is present at residues 25 to 37 (EKEDDEWILVDFI).

As to quaternary structure, interacts with p53/TP53 and HIPK2. Interacts with PRKCG, GABARAP, GABARAPL1, GABARAPL2, MAP1LC3A, MAP1LC3B and MAP1LC3C. In terms of tissue distribution, ubiquitously expressed.

It localises to the cytoplasm. The protein localises to the cytosol. The protein resides in the nucleus. Its subcellular location is the PML body. It is found in the cytoplasmic vesicle. It localises to the autophagosome. Functionally, antiproliferative and proapoptotic protein involved in cell stress response which acts as a dual regulator of transcription and autophagy. Acts as a positive regulator of autophagy. In response to cellular stress or activation of autophagy, relocates to autophagosomes where it interacts with autophagosome-associated proteins GABARAP, GABARAPL1/L2, MAP1LC3A/B/C and regulates autophagy. Acts as an antioxidant and plays a major role in p53/TP53-driven oxidative stress response. Possesses both a p53/TP53-independent intracellular reactive oxygen species (ROS) regulatory function and a p53/TP53-dependent transcription regulatory function. Positively regulates p53/TP53 and p73/TP73 and stimulates their capacity to induce apoptosis and regulate cell cycle. In response to double-strand DNA breaks, promotes p53/TP53 phosphorylation on 'Ser-46' and subsequent apoptosis. Acts as a tumor suppressor by inducing cell death by an autophagy and caspase-dependent mechanism. Can reduce cell migration by regulating the expression of SPARC. This is Tumor protein p53-inducible nuclear protein 1 (TP53INP1) from Homo sapiens (Human).